A 249-amino-acid polypeptide reads, in one-letter code: Type III pantothenate kinase (249 aa).

6-13 (DIGNSRTK) is a binding site for ATP. Substrate-binding positions include Tyr-89 and 96–99 (GIDR). Asp-98 acts as the Proton acceptor in catalysis. Asp-119 provides a ligand contact to K(+). Residue Thr-122 participates in ATP binding. Thr-174 is a binding site for substrate.

The protein belongs to the type III pantothenate kinase family. In terms of assembly, homodimer. The cofactor is NH4(+). K(+) is required as a cofactor.

It is found in the cytoplasm. It carries out the reaction (R)-pantothenate + ATP = (R)-4'-phosphopantothenate + ADP + H(+). It functions in the pathway cofactor biosynthesis; coenzyme A biosynthesis; CoA from (R)-pantothenate: step 1/5. In terms of biological role, catalyzes the phosphorylation of pantothenate (Pan), the first step in CoA biosynthesis. The polypeptide is Type III pantothenate kinase (Colwellia psychrerythraea (strain 34H / ATCC BAA-681) (Vibrio psychroerythus)).